The sequence spans 399 residues: Forkhead box protein A4 (399 aa).

Positions 119 to 213 (KPPYSYISLI…ENGCYLRRQK (95 aa)) form a DNA-binding region, fork-head. The segment covering 219 to 234 (RSKSGEREKKVNKPGD) has biased composition (basic and acidic residues). The disordered stretch occupies residues 219–290 (RSKSGEREKK…VGLSPTSEQA (72 aa)). Positions 267–277 (STGSSIHQASG) are enriched in polar residues.

The protein resides in the nucleus. Its function is as follows. Transcriptional repressor involved in embryonic nervous system development. Plays a role in the induction and patterning of the anterior-posterior neural axis. Involved in the establishment of floor plate differentiation from neural plate cells during gastrulation. Binds the anf1 promoter sequence to restrict expression of anf1 to the anterior of the neural plate, thereby patterning the forebrain. Can bind to the HNF-3-alpha DNA target sequence. Cooperates with t/bra in a dose-dependent manner to specify dorsal mesoderm formation, including notochord. May be involved in the dorso-ventral patterning of the mesoderm. Binds to DNA via the target sequence 5'-[GA]TAAA[TC]A-3', with 5'-GTAAATA-3' being the preferred binding site. In Xenopus tropicalis (Western clawed frog), this protein is Forkhead box protein A4.